A 313-amino-acid polypeptide reads, in one-letter code: uncharacterized protein (313 aa).

A signal peptide spans 1 to 24; the sequence is MKRRRRWRGWLLFLALCFCLLCEA. N-linked (GlcNAc...) asparagine; by host glycosylation is found at N28, N43, N57, N77, N101, N102, N109, N149, N168, N215, N222, N251, N254, and N267. The interval 47 to 73 is disordered; it reads ATTGTTTTSPNVTSTTSNTVTTPTTVS. Positions 90-114 are enriched in low complexity; sequence STVSGTRNTRNNNTTTIGTNATSPS. The interval 90-117 is disordered; sequence STVSGTRNTRNNNTTTIGTNATSPSSSV.

The protein belongs to the HHV-5 US34A protein family.

This is an uncharacterized protein from Homo sapiens (Human).